A 322-amino-acid polypeptide reads, in one-letter code: HPr kinase/phosphorylase (322 aa).

Residues histidine 146 and lysine 167 contribute to the active site. 161-168 is an ATP binding site; the sequence is GDSGLGKS. Serine 168 contacts Mg(2+). The active-site Proton acceptor; for phosphorylation activity. Proton donor; for dephosphorylation activity is the aspartate 185. The interval 209 to 218 is important for the catalytic mechanism of both phosphorylation and dephosphorylation; that stretch reads LEVRGLGLLD. Mg(2+) is bound at residue glutamate 210. Residue arginine 250 is part of the active site. The tract at residues 271–276 is important for the catalytic mechanism of dephosphorylation; the sequence is QVAAGR.

The protein belongs to the HPrK/P family. In terms of assembly, homohexamer. Mg(2+) serves as cofactor.

The enzyme catalyses [HPr protein]-L-serine + ATP = [HPr protein]-O-phospho-L-serine + ADP + H(+). It carries out the reaction [HPr protein]-O-phospho-L-serine + phosphate + H(+) = [HPr protein]-L-serine + diphosphate. Its function is as follows. Catalyzes the ATP- as well as the pyrophosphate-dependent phosphorylation of a specific serine residue in HPr, a phosphocarrier protein of the phosphoenolpyruvate-dependent sugar phosphotransferase system (PTS). HprK/P also catalyzes the pyrophosphate-producing, inorganic phosphate-dependent dephosphorylation (phosphorolysis) of seryl-phosphorylated HPr (P-Ser-HPr). The chain is HPr kinase/phosphorylase from Burkholderia ambifaria (strain ATCC BAA-244 / DSM 16087 / CCUG 44356 / LMG 19182 / AMMD) (Burkholderia cepacia (strain AMMD)).